Reading from the N-terminus, the 194-residue chain is GTP cyclohydrolase 1 (194 aa).

Cys-83, His-86, and Cys-155 together coordinate Zn(2+).

The protein belongs to the GTP cyclohydrolase I family. Toroid-shaped homodecamer, composed of two pentamers of five dimers.

The catalysed reaction is GTP + H2O = 7,8-dihydroneopterin 3'-triphosphate + formate + H(+). It functions in the pathway cofactor biosynthesis; 7,8-dihydroneopterin triphosphate biosynthesis; 7,8-dihydroneopterin triphosphate from GTP: step 1/1. This Streptococcus pyogenes serotype M5 (strain Manfredo) protein is GTP cyclohydrolase 1.